The chain runs to 247 residues: MNVLSCSTNTLKGLYDISGVEVGQHFYWQIGGFQVHGQVLITSWVVIAILLGSASIAVRNPQTIPNDSQNFFEYVLEFIRDVSKTQIGEEYGPWVPFIGTMFLFIFVSNWSGALLPWKIIELPHGELAAPTNDINTTVALALLTSVAYFYAGLTKKGLSYFSKYIQPTPILLPINILEDFTKPLSLSFRLFGNILADELVVVVLVSLVPLVVPIPVMFLGLFTSGIQALIFATLAAAYIGESMEGHH.

A run of 5 helical transmembrane segments spans residues 38-58 (QVLI…SIAV), 95-115 (VPFI…GALL), 134-154 (INTT…AGLT), 199-219 (LVVV…VMFL), and 220-240 (GLFT…AYIG).

Belongs to the ATPase A chain family. As to quaternary structure, F-type ATPases have 2 components, CF(1) - the catalytic core - and CF(0) - the membrane proton channel. CF(1) has five subunits: alpha(3), beta(3), gamma(1), delta(1), epsilon(1). CF(0) has four main subunits: a, b, b' and c.

It localises to the plastid. Its subcellular location is the chloroplast thylakoid membrane. Functionally, key component of the proton channel; it plays a direct role in the translocation of protons across the membrane. The protein is ATP synthase subunit a, chloroplastic of Eucalyptus globulus subsp. globulus (Tasmanian blue gum).